Consider the following 318-residue polypeptide: Beta-galactosidase small subunit (318 aa).

Belongs to the bacterial beta-galactosidase small subunit family. In terms of assembly, heterodimer of a large (LacL) and a small subunit (LacM).

The enzyme catalyses Hydrolysis of terminal non-reducing beta-D-galactose residues in beta-D-galactosides.. In terms of biological role, component of a beta-galactosidase. The chain is Beta-galactosidase small subunit from Lactobacillus helveticus (Lactobacillus suntoryeus).